The following is a 183-amino-acid chain: MEDSSLLSPISLLTIVIFLFILNLMMIIQDFSSSFPFRFHLFFSNAYILFTSIRNNKQNTELPIIKKVVVPNRADIKTSVEEVKAIIDDSEALYECLIEEGEEYLLEKNEMMGKEIVKEAFRLFDENQDGFIDENELKHVLSLLGYDECTKMECRKMVKVYDENRDGKIDFYEFVKLIEKSFS.

EF-hand domains follow at residues 112-147 (MGKEIVKEAFRLFDENQDGFIDENELKHVLSLLGYD) and 149-183 (CTKMECRKMVKVYDENRDGKIDFYEFVKLIEKSFS). Ca(2+) contacts are provided by Asp125, Asn127, Asp129, Glu136, Asp162, Asn164, Asp166, Lys168, and Glu173.

Its function is as follows. Potential calcium sensor. The sequence is that of Probable calcium-binding protein CML47 (CML47) from Arabidopsis thaliana (Mouse-ear cress).